Here is a 347-residue protein sequence, read N- to C-terminus: MKANVILCLLAPLVAALPTETIHLDPELAALRANLTERTADLWDRQASQSIDQLIKRKGKLYFGTATDRGLLQREKNAAIIQADLGQVTPENSMKWQSLENNQGQLNWGDADYLVNFAQQNGKSIRGHTLIWHSQLPAWVNNINNADTLRQVIRTHVSTVVGRYKGKIRAWDVVNEIFNEDGTLRSSVFSRLLGEEFVSIAFRAARDADPSARLYINDYNLDRANYGKVNGLKTYVSKWISQGVPIDGIGSQSHLSGGGGSGTLGALQQLATVPVTELAITELDIQGAPTTDYTQVVQACLSVSKCVGITVWGISDKDSWRASTNPLLFDANFNPKPAYNSIVGILQ.

The N-terminal stretch at 1-16 is a signal peptide; the sequence is MKANVILCLLAPLVAA. Residues 17 to 45 constitute a propeptide that is removed on maturation; sequence LPTETIHLDPELAALRANLTERTADLWDR. Pyrrolidone carboxylic acid is present on glutamine 46. One can recognise a GH10 domain in the interval 46–345; it reads QASQSIDQLI…KPAYNSIVGI (300 aa). Glutamate 176 functions as the Proton donor in the catalytic mechanism. Glutamate 282 functions as the Nucleophile in the catalytic mechanism. Cysteines 300 and 306 form a disulfide.

This sequence belongs to the glycosyl hydrolase 10 (cellulase F) family. In terms of assembly, monomer. Post-translationally, not glycosylated.

Its subcellular location is the secreted. It catalyses the reaction Endohydrolysis of (1-&gt;4)-beta-D-xylosidic linkages in xylans.. It functions in the pathway glycan degradation; xylan degradation. In terms of biological role, glycoside hydrolase involved in the hydrolysis of xylan, a major plant cell wall hemicellulose made up of 1,4-beta-linked D-xylopyranose residues. Catalyzes the endohydrolysis of the main-chain 1,4-beta-glycosidic bonds connecting the xylose subunits yielding various xylooligosaccharides and xylose. Produces xylobiose and xylotriose as the main degradation products. The sequence is that of Endo-1,4-beta-xylanase 3 (xyn3) from Hypocrea jecorina (strain QM6a) (Trichoderma reesei).